A 955-amino-acid chain; its full sequence is Aminopeptidase A (955 aa).

Residues 1 to 17 (MDIEDKSSKMHCMKGKH) lie on the Cytoplasmic side of the membrane. The chain crosses the membrane as a helical; Signal-anchor for type II membrane protein span at residues 18–38 (VAIICGVVIAVGLILGLGLGL). The Extracellular segment spans residues 39–955 (GLKPEACNPP…LENSEQPNFV (917 aa)). Positions 49-69 (EDNGLLSTKPPTTSTPNVTNP) are disordered. The span at 55-69 (STKPPTTSTPNVTNP) shows a compositional bias: low complexity. N-linked (GlcNAc...) asparagine glycans are attached at residues asparagine 65, asparagine 118, and asparagine 192. Substrate is bound at residue glutamate 218. Residues asparagine 312, asparagine 319, and asparagine 335 are each glycosylated (N-linked (GlcNAc...) asparagine). 352–356 (GAMEN) serves as a coordination point for substrate. Residue histidine 388 coordinates Zn(2+). Glutamate 389 (proton acceptor) is an active-site residue. Zn(2+)-binding residues include histidine 392 and glutamate 411. N-linked (GlcNAc...) asparagine glycans are attached at residues asparagine 458, asparagine 547, asparagine 584, asparagine 592, asparagine 647, asparagine 674, asparagine 681, asparagine 759, asparagine 766, asparagine 823, and asparagine 836. Arginine 882 contributes to the substrate binding site.

The protein belongs to the peptidase M1 family. Homodimer; disulfide-linked. Requires Zn(2+) as cofactor.

Its subcellular location is the cell membrane. The catalysed reaction is Release of N-terminal glutamate (and to a lesser extent aspartate) from a peptide.. Its activity is regulated as follows. The partially purified protein is inhibited by the aminopeptidase competitive inhibitors amastatin (Leu and acidic inhibitor), and bestatin (Leu inhibitor), by chelating agents EDTA, and 1,10-Phenanthroline, as well as by Zn(2+) ions. Substrate specificity is modulated by Ca(2+), Ba(2+), and Mn(2+) ions which enhances the enzymatic activity for cleavage of acidic residues. Venom protein that cleaves N-terminal acidic residues from peptides with high potency in presence of calcium. It may have several roles in venom including alteration of blood pressure by cleaving circulating angiotensin-2, general degradation of host tissue, increase of permeability to other venom components, and/or processing of other toxins in the venom. This is Aminopeptidase A from Gloydius brevicauda (Korean slamosa snake).